Here is a 562-residue protein sequence, read N- to C-terminus: Probable malate:quinone oxidoreductase (562 aa).

This sequence belongs to the MQO family. It depends on FAD as a cofactor.

The enzyme catalyses (S)-malate + a quinone = a quinol + oxaloacetate. It functions in the pathway carbohydrate metabolism; tricarboxylic acid cycle; oxaloacetate from (S)-malate (quinone route): step 1/1. This Stenotrophomonas maltophilia (strain K279a) protein is Probable malate:quinone oxidoreductase.